A 380-amino-acid polypeptide reads, in one-letter code: Lipid-A-disaccharide synthase (380 aa).

This sequence belongs to the LpxB family.

It carries out the reaction a lipid X + a UDP-2-N,3-O-bis[(3R)-3-hydroxyacyl]-alpha-D-glucosamine = a lipid A disaccharide + UDP + H(+). The protein operates within bacterial outer membrane biogenesis; LPS lipid A biosynthesis. Condensation of UDP-2,3-diacylglucosamine and 2,3-diacylglucosamine-1-phosphate to form lipid A disaccharide, a precursor of lipid A, a phosphorylated glycolipid that anchors the lipopolysaccharide to the outer membrane of the cell. This Francisella philomiragia subsp. philomiragia (strain ATCC 25017 / CCUG 19701 / FSC 153 / O#319-036) protein is Lipid-A-disaccharide synthase.